A 350-amino-acid polypeptide reads, in one-letter code: Cobalt-precorrin-5B C(1)-methyltransferase (350 aa).

This sequence belongs to the CbiD family.

The catalysed reaction is Co-precorrin-5B + S-adenosyl-L-methionine = Co-precorrin-6A + S-adenosyl-L-homocysteine. It functions in the pathway cofactor biosynthesis; adenosylcobalamin biosynthesis; cob(II)yrinate a,c-diamide from sirohydrochlorin (anaerobic route): step 6/10. Catalyzes the methylation of C-1 in cobalt-precorrin-5B to form cobalt-precorrin-6A. The protein is Cobalt-precorrin-5B C(1)-methyltransferase of Sulfurisphaera tokodaii (strain DSM 16993 / JCM 10545 / NBRC 100140 / 7) (Sulfolobus tokodaii).